The sequence spans 161 residues: Large ribosomal subunit protein uL15 (161 aa).

Over residues 1 to 13 (MKLNELRDNEGAA) the composition is skewed to basic and acidic residues. Residues 1–51 (MKLNELRDNEGAARKKKRVARGPGSGKGKTAGRGIKGQKSRSGVALNGYEG) form a disordered region. Positions 23–35 (PGSGKGKTAGRGI) are enriched in gly residues.

This sequence belongs to the universal ribosomal protein uL15 family. Part of the 50S ribosomal subunit.

In terms of biological role, binds to the 23S rRNA. This is Large ribosomal subunit protein uL15 from Cereibacter sphaeroides (strain ATCC 17023 / DSM 158 / JCM 6121 / CCUG 31486 / LMG 2827 / NBRC 12203 / NCIMB 8253 / ATH 2.4.1.) (Rhodobacter sphaeroides).